A 115-amino-acid chain; its full sequence is Gonadotropin subunit beta-2 (115 aa).

Cystine bridges form between Cys6–Cys54, Cys20–Cys69, Cys23–Cys107, Cys31–Cys85, Cys35–Cys87, and Cys90–Cys97. Asn10 carries an N-linked (GlcNAc...) asparagine glycan.

Belongs to the glycoprotein hormones subunit beta family. In terms of assembly, heterodimer of an alpha and a beta chain.

It is found in the secreted. Its function is as follows. Involved in gametogenesis and steroidogenesis. This chain is Gonadotropin subunit beta-2 (cgbb), found in Thunnus obesus (Bigeye tuna).